The chain runs to 273 residues: tRNA (guanine-N(7)-)-methyltransferase (273 aa).

The S-adenosyl-L-methionine site is built by Gly-86, Glu-109, Arg-111, Asn-142, Ala-143, and Leu-162. Asp-165 is an active-site residue. Residues 166–174 (PHFKKTKHK) are alphaC helix. Positions 240 and 242 each coordinate S-adenosyl-L-methionine. The interval 240 to 248 (TEEGKKVQR) is alpha6 helix.

The protein belongs to the class I-like SAM-binding methyltransferase superfamily. TrmB family. Catalytic component of the METTL1-WDR4 complex, composed of mettl1 and wdr4.

It is found in the nucleus. The catalysed reaction is guanosine(46) in tRNA + S-adenosyl-L-methionine = N(7)-methylguanosine(46) in tRNA + S-adenosyl-L-homocysteine. It carries out the reaction a guanosine in mRNA + S-adenosyl-L-methionine = an N(7)-methylguanosine in mRNA + S-adenosyl-L-homocysteine. The enzyme catalyses a guanosine in miRNA + S-adenosyl-L-methionine = an N(7)-methylguanosine in miRNA + S-adenosyl-L-homocysteine. It functions in the pathway tRNA modification; N(7)-methylguanine-tRNA biosynthesis. Functionally, catalytic component of METTL1-WDR4 methyltransferase complex that mediates the formation of N(7)-methylguanine in a subset of RNA species, such as tRNAs, mRNAs and microRNAs (miRNAs). Catalyzes the formation of N(7)-methylguanine at position 46 (m7G46) in a large subset of tRNAs that contain the 5'-RAGGU-3' motif within the variable loop. M7G46 interacts with C13-G22 in the D-loop to stabilize tRNA tertiary structure and protect tRNAs from decay. Also acts as a methyltransferase for a subset of internal N(7)-methylguanine in mRNAs. Internal N(7)-methylguanine methylation of mRNAs in response to stress promotes their relocalization to stress granules, thereby suppressing their translation. Also methylates a specific subset of miRNAs. The chain is tRNA (guanine-N(7)-)-methyltransferase (mettl1) from Xenopus laevis (African clawed frog).